The chain runs to 416 residues: Multifunctional CCA protein (416 aa).

2 residues coordinate ATP: Gly-8 and Arg-11. Positions 8 and 11 each coordinate CTP. Positions 21 and 23 each coordinate Mg(2+). ATP contacts are provided by Arg-91, Arg-137, and Arg-140. Residues Arg-91, Arg-137, and Arg-140 each contribute to the CTP site. The 102-residue stretch at 228–329 folds into the HD domain; that stretch reads TGLHTMMVLA…IKLFDKADFW (102 aa).

Belongs to the tRNA nucleotidyltransferase/poly(A) polymerase family. Bacterial CCA-adding enzyme type 1 subfamily. Monomer. Can also form homodimers and oligomers. Mg(2+) serves as cofactor. Ni(2+) is required as a cofactor.

It catalyses the reaction a tRNA precursor + 2 CTP + ATP = a tRNA with a 3' CCA end + 3 diphosphate. The catalysed reaction is a tRNA with a 3' CCA end + 2 CTP + ATP = a tRNA with a 3' CCACCA end + 3 diphosphate. Catalyzes the addition and repair of the essential 3'-terminal CCA sequence in tRNAs without using a nucleic acid template. Adds these three nucleotides in the order of C, C, and A to the tRNA nucleotide-73, using CTP and ATP as substrates and producing inorganic pyrophosphate. tRNA 3'-terminal CCA addition is required both for tRNA processing and repair. Also involved in tRNA surveillance by mediating tandem CCA addition to generate a CCACCA at the 3' terminus of unstable tRNAs. While stable tRNAs receive only 3'-terminal CCA, unstable tRNAs are marked with CCACCA and rapidly degraded. This Shewanella sp. (strain MR-4) protein is Multifunctional CCA protein.